The primary structure comprises 271 residues: Transmembrane protein 150A (271 aa).

Residues 1–3 are Cytoplasmic-facing; that stretch reads MTG. The chain crosses the membrane as a helical span at residues 4–24; sequence WIVLPISLTAFSIPGIWIVYA. The Extracellular segment spans residues 25 to 75; it reads MAVMNHHVCPVENWTYNLTCTDDNTKAGTPKSCCTLEDVPLISKCGTYPPE. 2 N-linked (GlcNAc...) asparagine glycosylation sites follow: N37 and N41. The helical transmembrane segment at 76 to 96 threads the bilayer; it reads SCLFSLIGNVGAFMVVIICLL. The Cytoplasmic portion of the chain corresponds to 97-108; the sequence is RYSQVIEISQRS. A helical transmembrane segment spans residues 109 to 129; it reads WLNTTALIAGCTNAAGLVMVG. Residues 130–140 lie on the Extracellular side of the membrane; the sequence is NFQVDYAKSLH. A helical membrane pass occupies residues 141-161; sequence YIGAGVAFPAGLLFVCLSSIL. The Cytoplasmic segment spans residues 162-182; it reads SYQLAASALDYWLGHLRVSLT. A helical transmembrane segment spans residues 183 to 203; it reads IVALISLVLTGVFFIQESFLM. Topologically, residues 204 to 205 are extracellular; it reads QH. Residues 206–226 traverse the membrane as a helical segment; that stretch reads LVAICEWIFVLDILVFYGTFA. The Cytoplasmic segment spans residues 227–271; that stretch reads YEFGSVSTDTMMAALQSSAARSCKSPGSSSTSTQLHCNAERIAMI.

Belongs to the DRAM/TMEM150 family.

It localises to the cell membrane. Its function is as follows. Regulates localization of phosphatidylinositol 4-kinase (PI4K) to the plasma membrane. This chain is Transmembrane protein 150A (tmem150a), found in Xenopus laevis (African clawed frog).